Reading from the N-terminus, the 261-residue chain is Ribosomal RNA small subunit methyltransferase A (261 aa).

Residues N15, I17, G42, E64, D90, and N109 each coordinate S-adenosyl-L-methionine.

Belongs to the class I-like SAM-binding methyltransferase superfamily. rRNA adenine N(6)-methyltransferase family. RsmA subfamily.

It localises to the cytoplasm. It carries out the reaction adenosine(1518)/adenosine(1519) in 16S rRNA + 4 S-adenosyl-L-methionine = N(6)-dimethyladenosine(1518)/N(6)-dimethyladenosine(1519) in 16S rRNA + 4 S-adenosyl-L-homocysteine + 4 H(+). Functionally, specifically dimethylates two adjacent adenosines (A1518 and A1519) in the loop of a conserved hairpin near the 3'-end of 16S rRNA in the 30S particle. May play a critical role in biogenesis of 30S subunits. This chain is Ribosomal RNA small subunit methyltransferase A, found in Wolbachia sp. subsp. Brugia malayi (strain TRS).